The sequence spans 380 residues: Cytochrome b (380 aa).

4 helical membrane-spanning segments follow: residues 33 to 53 (FGSLLGLCLITQVLTGLFLAM), 77 to 98 (WLLRNIHANGASFFFICIYLHI), 113 to 133 (WNIGVLLLLLVMMTAFVGYVL), and 178 to 198 (FFTFHFLLPFIIMGATMLHLL). 2 residues coordinate heme b: His83 and His97. His182 and His196 together coordinate heme b. Residue His201 coordinates a ubiquinone. The next 4 membrane-spanning stretches (helical) occupy residues 226–246 (YKDLLGFTILLAILSALALLN), 288–308 (LGGVLALLLSILILVVVPVLH), 320–340 (PSQTLFWILVANMLVLTWIGG), and 347–367 (FIIIGQIASVLYFMLFLILIP).

This sequence belongs to the cytochrome b family. The cytochrome bc1 complex contains 3 respiratory subunits (MT-CYB, CYC1 and UQCRFS1), 2 core proteins (UQCRC1 and UQCRC2) and probably 6 low-molecular weight proteins. It depends on heme b as a cofactor.

Its subcellular location is the mitochondrion inner membrane. Functionally, component of the ubiquinol-cytochrome c reductase complex (complex III or cytochrome b-c1 complex) that is part of the mitochondrial respiratory chain. The b-c1 complex mediates electron transfer from ubiquinol to cytochrome c. Contributes to the generation of a proton gradient across the mitochondrial membrane that is then used for ATP synthesis. This is Cytochrome b (mt-cyb) from Atractosteus spatula (Alligator gar).